Reading from the N-terminus, the 447-residue chain is uncharacterized protein (447 aa).

Residues 39-76 (PQAAPYTRNNGMGECRRGHRQGHRAEVHDNRPADKVGQ) form a disordered region. Residues 61 to 72 (HRAEVHDNRPAD) show a composition bias toward basic and acidic residues.

Belongs to the 3-oxoacid CoA-transferase subunit A family.

This is an uncharacterized protein from Archaeoglobus fulgidus (strain ATCC 49558 / DSM 4304 / JCM 9628 / NBRC 100126 / VC-16).